The sequence spans 156 residues: Phosphopantetheine adenylyltransferase (156 aa).

Thr10 is a binding site for substrate. ATP is bound by residues 10–11 and His18; that span reads TF. 3 residues coordinate substrate: Lys42, Leu74, and Arg88. Residues 89 to 91, Glu99, and 124 to 130 contribute to the ATP site; these read GLR and NAFISSS.

The protein belongs to the bacterial CoaD family. Homohexamer. Mg(2+) is required as a cofactor.

The protein resides in the cytoplasm. It catalyses the reaction (R)-4'-phosphopantetheine + ATP + H(+) = 3'-dephospho-CoA + diphosphate. Its pathway is cofactor biosynthesis; coenzyme A biosynthesis; CoA from (R)-pantothenate: step 4/5. Reversibly transfers an adenylyl group from ATP to 4'-phosphopantetheine, yielding dephospho-CoA (dPCoA) and pyrophosphate. The polypeptide is Phosphopantetheine adenylyltransferase (Campylobacter curvus (strain 525.92)).